Reading from the N-terminus, the 241-residue chain is Synaptogyrin (241 aa).

The MARVEL domain maps to 30–179 (FAMKPQVVIR…CALMAYKRFL (150 aa)). 4 helical membrane-spanning segments follow: residues 34–54 (PQVV…GCIS), 81–101 (MVGV…FLFE), 115–135 (ADMG…LYLW), and 155–175 (TAIW…LMAY). Positions 216–241 (ASPFGQPQQGGMEQQQSGMEYQQPTY) are disordered. The span at 220–241 (GQPQQGGMEQQQSGMEYQQPTY) shows a compositional bias: low complexity.

It belongs to the synaptogyrin family.

The protein localises to the cytoplasmic vesicle membrane. It is found in the cytoplasmic vesicle. The protein resides in the secretory vesicle membrane. It localises to the secretory vesicle. Its subcellular location is the synaptic vesicle membrane. Functionally, required for the correct formation of synaptic vesicles at nerve terminals and has a role in the regulation of the synaptic vesicle exo-endocytic cycle. The chain is Synaptogyrin from Drosophila melanogaster (Fruit fly).